A 427-amino-acid chain; its full sequence is Trigger factor (427 aa).

One can recognise a PPIase FKBP-type domain in the interval 163–248 (GDTVVIDFVG…IHEVKEKEVP (86 aa)).

It belongs to the FKBP-type PPIase family. Tig subfamily.

It is found in the cytoplasm. The enzyme catalyses [protein]-peptidylproline (omega=180) = [protein]-peptidylproline (omega=0). In terms of biological role, involved in protein export. Acts as a chaperone by maintaining the newly synthesized protein in an open conformation. Functions as a peptidyl-prolyl cis-trans isomerase. This chain is Trigger factor, found in Streptococcus sanguinis (strain SK36).